A 582-amino-acid chain; its full sequence is Calcium-dependent protein kinase 24 (582 aa).

Residues methionine 1–aspartate 36 are disordered. A lipid anchor (N-myristoyl glycine) is attached at glycine 2. The region spanning tyrosine 66 to isoleucine 324 is the Protein kinase domain. ATP is bound by residues leucine 72–threonine 80 and lysine 95. Aspartate 190 (proton acceptor) is an active-site residue. At serine 230 the chain carries Phosphoserine. The autoinhibitory domain stretch occupies residues alanine 330–valine 360. 4 EF-hand domains span residues glutamate 367–valine 402, valine 403–methionine 438, glycine 439–glycine 474, and glycine 478–tryptophan 513. 18 residues coordinate Ca(2+): aspartate 380, aspartate 382, asparagine 384, histidine 386, glutamate 391, aspartate 416, aspartate 418, asparagine 420, methionine 422, glutamate 427, aspartate 452, asparagine 454, asparagine 456, glutamate 463, aspartate 491, asparagine 493, aspartate 495, and arginine 497. The residue at position 499 (serine 499) is a Phosphoserine. Glutamate 502 contributes to the Ca(2+) binding site.

Belongs to the protein kinase superfamily. Ser/Thr protein kinase family. CDPK subfamily.

The protein localises to the membrane. The catalysed reaction is L-seryl-[protein] + ATP = O-phospho-L-seryl-[protein] + ADP + H(+). It carries out the reaction L-threonyl-[protein] + ATP = O-phospho-L-threonyl-[protein] + ADP + H(+). Its activity is regulated as follows. Activated by calcium. Autophosphorylation may play an important role in the regulation of the kinase activity. In terms of biological role, may play a role in signal transduction pathways that involve calcium as a second messenger. The polypeptide is Calcium-dependent protein kinase 24 (CPK24) (Arabidopsis thaliana (Mouse-ear cress)).